Consider the following 206-residue polypeptide: Thymidylate kinase (206 aa).

Residue 11–18 (GIDGAGKT) participates in ATP binding.

It belongs to the thymidylate kinase family.

It carries out the reaction dTMP + ATP = dTDP + ADP. Functionally, phosphorylation of dTMP to form dTDP in both de novo and salvage pathways of dTTP synthesis. In Burkholderia thailandensis (strain ATCC 700388 / DSM 13276 / CCUG 48851 / CIP 106301 / E264), this protein is Thymidylate kinase.